Reading from the N-terminus, the 265-residue chain is Anaphase-promoting complex subunit 9 (265 aa).

As to quaternary structure, the APC/C is composed of at least 13 subunits that stay tightly associated throughout the cell cycle: APC1, APC2, APC4, APC5, APC9, APC11, CDC16, CDC23, CDC26, CDC27, DOC1, MND2 and SWM1.

The protein resides in the cytoplasm. It localises to the nucleus. It functions in the pathway protein modification; protein ubiquitination. Functionally, component of the anaphase promoting complex/cyclosome (APC/C), a cell cycle-regulated E3 ubiquitin-protein ligase complex that controls progression through mitosis and the G1 phase of the cell cycle. The APC/C is thought to confer substrate specificity and, in the presence of ubiquitin-conjugating E2 enzymes, it catalyzes the formation of protein-ubiquitin conjugates that are subsequently degraded by the 26S proteasome. In early mitosis, the APC/C is activated by CDC20 and targets securin PDS1, the B-type cyclin CLB5, and other anaphase inhibitory proteins for proteolysis, thereby triggering the separation of sister chromatids at the metaphase-to-anaphase transition. In late mitosis and in G1, degradation of CLB5 allows activation of the APC/C by CDH1, which is needed to destroy CDC20 and the B-type cyclin CLB2 to allow exit from mitosis and creating the low CDK state necessary for cytokinesis and for reforming prereplicative complexes in G1 prior to another round of replication. The polypeptide is Anaphase-promoting complex subunit 9 (APC9) (Saccharomyces cerevisiae (strain ATCC 204508 / S288c) (Baker's yeast)).